Consider the following 216-residue polypeptide: UPF0193 protein EVG1 homolog (216 aa).

It belongs to the UPF0193 (EVG1) family.

This Mus musculus (Mouse) protein is UPF0193 protein EVG1 homolog.